The primary structure comprises 316 residues: Insulin-like growth factor-binding protein 2 (316 aa).

The signal sequence occupies residues 1-29 (MLPRLGGTALSLLPLLLLLLGTGGRGARA). The IGFBP N-terminal domain occupies 31–126 (VLFRCPPCTP…VLGEGTCEKR (96 aa)). Disulfide bonds link Cys35–Cys76, Cys38–Cys78, Cys46–Cys79, Cys68–Cys82, Cys90–Cys103, and Cys97–Cys123. Residues 189 to 217 (QHRQMGKGGKHHLGLEEPKKLRPPPARTP) are disordered. Residues 215 to 297 (RTPCQQELDQ…APTIRGDPEC (83 aa)) enclose the Thyroglobulin type-1 domain. 3 cysteine pairs are disulfide-bonded: Cys218/Cys252, Cys263/Cys274, and Cys276/Cys297. A Cell attachment site motif is present at residues 292–294 (RGD).

As to quaternary structure, interacts with IGF1. Interacts with IGF2. Interacts (via RGD motif) with integrin alpha5/ITGA5; this interaction induces cell migration, adhesion or apoptosis according to the context. Interacts with PTPRB; this interaction leads to PTPRB dimerization and inactivation. In terms of processing, cleaved by MMP9 leading to release of free IGF2 from IGFBP2-IGF2 complex, which contributes to enhance the motility and the growth of astrocytes. O-glycosylated.

It localises to the secreted. Functionally, may have both growth-inhibiting and growth-promoting effects, depending on tissue type; increases IGF-induced DNA synthesis in the uterine epithelium. IGF-binding proteins prolong the half-life of the IGFs and have been shown to either inhibit or stimulate the growth promoting effects of the IGFs on cell culture. They alter the interaction of IGFs with their cell surface receptors. Its function is as follows. Multifunctional protein that plays a critical role in regulating the availability of IGFs such as IGF1 and IGF2 to their receptors and thereby regulates IGF-mediated cellular processes including proliferation, differentiation, and apoptosis in a cell-type specific manner. Functions coordinately with receptor protein tyrosine phosphatase beta/PTPRB and the IGF1 receptor to regulate IGF1-mediated signaling by stimulating the phosphorylation of PTEN leading to its inactivation and AKT1 activation. Plays a positive role in cell migration via interaction with integrin alpha5/ITGA5 through an RGD motif. Additionally, interaction with ITGA5/ITGB1 enhances the adhesion of endothelial progenitor cells to endothelial cells. Upon mitochondrial damage, facilitates apoptosis with ITGA5 of podocytes, and then activates the phosphorylation of focal adhesion kinase (FAK)-mediated mitochondrial injury. The protein is Insulin-like growth factor-binding protein 2 (IGFBP2) of Sus scrofa (Pig).